The chain runs to 198 residues: Superoxide dismutase [Fe] (198 aa).

Residues His27, His74, Asp158, and His162 each contribute to the Fe cation site.

The protein belongs to the iron/manganese superoxide dismutase family. Homodimer. The cofactor is Fe cation.

It localises to the cytoplasm. It catalyses the reaction 2 superoxide + 2 H(+) = H2O2 + O2. Its function is as follows. Destroys superoxide anion radicals which are normally produced within the cells and which are toxic to biological systems. The protein is Superoxide dismutase [Fe] (SODB) of Plasmodium falciparum (isolate 3D7).